The primary structure comprises 153 residues: NADPH-dependent 7-cyano-7-deazaguanine reductase (153 aa).

Polar residues predominate over residues 1–17 (MTDTRNLTQLGSKTQAP). Positions 1–23 (MTDTRNLTQLGSKTQAPASPEAA) are disordered. The Thioimide intermediate role is filled by C51. D58 (proton donor) is an active-site residue. Substrate-binding positions include 73–75 (VES) and 92–93 (HE).

Belongs to the GTP cyclohydrolase I family. QueF type 1 subfamily.

The protein localises to the cytoplasm. The catalysed reaction is 7-aminomethyl-7-carbaguanine + 2 NADP(+) = 7-cyano-7-deazaguanine + 2 NADPH + 3 H(+). Its pathway is tRNA modification; tRNA-queuosine biosynthesis. Its function is as follows. Catalyzes the NADPH-dependent reduction of 7-cyano-7-deazaguanine (preQ0) to 7-aminomethyl-7-deazaguanine (preQ1). This Chelativorans sp. (strain BNC1) protein is NADPH-dependent 7-cyano-7-deazaguanine reductase.